Here is a 555-residue protein sequence, read N- to C-terminus: Zinc finger and SCAN domain-containing protein 21 (555 aa).

Disordered stretches follow at residues 1–74 (MTKV…SKDK), 102–133 (TIKA…YHDT), 204–243 (LDEP…TQHV), and 263–354 (EEVF…RPAP). 3 consecutive repeat copies span residues 18-56 (ESMG…QDTL), 57-95 (EPMG…QDTL), and 96-134 (EQLG…HDTP). Residues 18-134 (ESMGPSPIKV…FRQFGYHDTP (117 aa)) form a 3 X 39 AA approximate tandem repeats region. Residue K26 forms a Glycyl lysine isopeptide (Lys-Gly) (interchain with G-Cter in SUMO2) linkage. One can recognise an SCAN box domain in the interval 122-204 (RQRFRQFGYH…TLLEDLEQEL (83 aa)). Residues 210 to 240 (QVSSPPNEQKQSWEKMSTSGTAMESLSSTET) show a composition bias toward polar residues. Residues 280–302 (PQKEDSADEHRSSEEESHADGLK) show a composition bias toward basic and acidic residues. Glycyl lysine isopeptide (Lys-Gly) (interchain with G-Cter in SUMO2) cross-links involve residues K302 and K313. Basic and acidic residues predominate over residues 316 to 332 (SRSERQWANNLERERGT). 7 consecutive C2H2-type zinc fingers follow at residues 359–381 (YICA…RRTH), 387–409 (YVCT…YRTH), 415–436 (YDCK…QRMH), 442–464 (YQCK…YRIH), 470–492 (YQCN…QRLH), 498–520 (YKCK…HRIH), and 526–548 (YWCS…QRVH). Residue K431 forms a Glycyl lysine isopeptide (Lys-Gly) (interchain with G-Cter in SUMO2) linkage.

This sequence belongs to the krueppel C2H2-type zinc-finger protein family. In terms of tissue distribution, expressed predominantly in the spermatocytes and spermatids of adult testes. It is also present at lower levels in the ovary, brain, spleen, embryo and fetus.

It localises to the nucleus. Functionally, strong transcriptional activator. Plays an important role in spermatogenesis; essential for the progression of meiotic prophase I in spermatocytes. This chain is Zinc finger and SCAN domain-containing protein 21 (Zscan21), found in Mus musculus (Mouse).